Here is a 506-residue protein sequence, read N- to C-terminus: Cysteine protease 1 (506 aa).

The disordered stretch occupies residues 1-21 (MTSSRPSGRDSTGWQETVSNT). Cys226 (nucleophile) is an active-site residue. Active-site residues include Asp399 and His401.

The protein belongs to the peptidase C54 family.

Its subcellular location is the cytoplasm. The protein resides in the nucleus. It is found in the preautophagosomal structure. It carries out the reaction [protein]-C-terminal L-amino acid-glycyl-phosphatidylethanolamide + H2O = [protein]-C-terminal L-amino acid-glycine + a 1,2-diacyl-sn-glycero-3-phosphoethanolamine. In terms of biological role, cysteine protease that plays a key role in cytoplasm to vacuole transport (Cvt) and autophagy by mediating both proteolytic activation and delipidation of ATG8. Required for selective autophagic degradation of the nucleus (nucleophagy) as well as for mitophagy which contributes to regulate mitochondrial quantity and quality by eliminating the mitochondria to a basal level to fulfill cellular energy requirements and preventing excess ROS production. The protease activity is required for proteolytic activation of ATG8: cleaves the C-terminal amino acid of ATG8 to reveal a C-terminal glycine. ATG8 ubiquitin-like activity requires the exposure of the glycine at the C-terminus for its conjugation to phosphatidylethanolamine (PE) and its insertion to membranes, which is necessary for autophagy. The ATG8-PE conjugate mediates tethering between adjacent membranes and stimulates membrane hemifusion, leading to expansion of the autophagosomal membrane during autophagy. In addition to the protease activity, also catalyzes deconjugation of PE-conjugated forms of ATG8 during macroautophagy: ATG8 delipidation is required to release the protein from membranes, which facilitates multiple events during macroautophagy, and especially for efficient autophagosome biogenesis, the assembly of ATG9-containing tubulovesicular clusters into phagophores/autophagosomes, and for the disassembly of PAS-associated ATG components. ATG8 delipidation by ATG4 also recycles ATG8-PE generated on inappropriate membranes to maintain a reservoir of unlipidated ATG8 that is required for autophagosome formation at the PAS. The protein is Cysteine protease 1 (cpr-1) of Neurospora crassa (strain ATCC 24698 / 74-OR23-1A / CBS 708.71 / DSM 1257 / FGSC 987).